Reading from the N-terminus, the 931-residue chain is Protocadherin gamma-A1 (931 aa).

An N-terminal signal peptide occupies residues 1–28; the sequence is MKIQKKLTGCSRLMLLCLSLELLLEAGA. 6 consecutive Cadherin domains span residues 29-133, 134-242, 243-347, 348-452, 453-562, and 570-682; these read GNIH…TPQF, QLEE…PPAF, TQAQ…APEV, TITS…SPVF, HQDS…APEI, and DGST…EPSA. The Extracellular segment spans residues 29-692; it reads GNIHYSVPEE…KPNDSDLTLY (664 aa). Asn-265, Asn-419, and Asn-545 each carry an N-linked (GlcNAc...) asparagine glycan. The N-linked (GlcNAc...) asparagine glycan is linked to Asn-685. The helical transmembrane segment at 693 to 713 threads the bilayer; it reads LVVAAAAVSCVFLAFVIVLLA. The Cytoplasmic segment spans residues 714–931; that stretch reads HRLRRWHKSR…KKKSGKKEKK (218 aa). 2 disordered regions span residues 801 to 840 and 901 to 931; these read KKEP…WPNN and ATLT…KEKK. The segment covering 805–840 has biased composition (polar residues); that stretch reads FSQQAPPNTDWRFSQAQRPGTSGSQNGDDTGTWPNN. Basic residues predominate over residues 921–931; the sequence is NKKKSGKKEKK.

The protein resides in the cell membrane. Its function is as follows. Potential calcium-dependent cell-adhesion protein. May be involved in the establishment and maintenance of specific neuronal connections in the brain. The polypeptide is Protocadherin gamma-A1 (PCDHGA1) (Homo sapiens (Human)).